The following is an 86-amino-acid chain: Small ribosomal subunit protein bS20 (86 aa).

Basic and acidic residues predominate over residues 1–18 (MANIKSQEKRIRTNERAR). The segment at 1–25 (MANIKSQEKRIRTNERARLRNQATK) is disordered.

The protein belongs to the bacterial ribosomal protein bS20 family.

Its function is as follows. Binds directly to 16S ribosomal RNA. The chain is Small ribosomal subunit protein bS20 from Mycobacteroides abscessus (strain ATCC 19977 / DSM 44196 / CCUG 20993 / CIP 104536 / JCM 13569 / NCTC 13031 / TMC 1543 / L948) (Mycobacterium abscessus).